The primary structure comprises 162 residues: NADH-quinone oxidoreductase subunit I (162 aa).

4Fe-4S ferredoxin-type domains lie at 53 to 83 (LRRY…IESD) and 93 to 122 (TRYD…ETHI). [4Fe-4S] cluster-binding residues include Cys63, Cys66, Cys69, Cys73, Cys102, Cys105, Cys108, and Cys112.

The protein belongs to the complex I 23 kDa subunit family. As to quaternary structure, NDH-1 is composed of 14 different subunits. Subunits NuoA, H, J, K, L, M, N constitute the membrane sector of the complex. It depends on [4Fe-4S] cluster as a cofactor.

The protein localises to the cell inner membrane. It catalyses the reaction a quinone + NADH + 5 H(+)(in) = a quinol + NAD(+) + 4 H(+)(out). Functionally, NDH-1 shuttles electrons from NADH, via FMN and iron-sulfur (Fe-S) centers, to quinones in the respiratory chain. The immediate electron acceptor for the enzyme in this species is believed to be ubiquinone. Couples the redox reaction to proton translocation (for every two electrons transferred, four hydrogen ions are translocated across the cytoplasmic membrane), and thus conserves the redox energy in a proton gradient. The sequence is that of NADH-quinone oxidoreductase subunit I from Bordetella avium (strain 197N).